The following is a 237-amino-acid chain: Phosphoadenosine 5'-phosphosulfate reductase (237 aa).

The Nucleophile; cysteine thiosulfonate intermediate role is filled by cysteine 231.

This sequence belongs to the PAPS reductase family. CysH subfamily.

It localises to the cytoplasm. It carries out the reaction [thioredoxin]-disulfide + sulfite + adenosine 3',5'-bisphosphate + 2 H(+) = [thioredoxin]-dithiol + 3'-phosphoadenylyl sulfate. Its pathway is sulfur metabolism; hydrogen sulfide biosynthesis; sulfite from sulfate: step 3/3. Its function is as follows. Catalyzes the formation of sulfite from phosphoadenosine 5'-phosphosulfate (PAPS) using thioredoxin as an electron donor. In Xylella fastidiosa (strain 9a5c), this protein is Phosphoadenosine 5'-phosphosulfate reductase.